A 368-amino-acid chain; its full sequence is G-protein coupled receptor 183-A (368 aa).

The Extracellular segment spans residues 1–27 (METTSANFTQNDSNVCTNLYNHRGWAQ). N-linked (GlcNAc...) asparagine glycosylation is found at Asn7 and Asn11. Residues 28–53 (YFLPAMYSLICIVGLLGNVLALHVIW) traverse the membrane as a helical segment. The Cytoplasmic segment spans residues 54–73 (PNLKKINSTTLYSANLVVSD). A helical transmembrane segment spans residues 74–91 (ILFSLALPLRVVYYARGF). Topologically, residues 92–101 (DWPMGEGLCK) are extracellular. Cysteines 100 and 178 form a disulfide. Residues 102 to 123 (AVALLFYINMYAGVNFMTCLSV) form a helical membrane-spanning segment. Residues 124–145 (DRFIAVVLPLRFSRFRKVQKVR) lie on the Cytoplasmic side of the membrane. A helical membrane pass occupies residues 146–164 (YICGVVWVVVLMQTLPLLS). Topologically, residues 165 to 189 (MPMTNIEQSGHITCMEYPNFEKIDN) are extracellular. A helical membrane pass occupies residues 190–212 (LPVMLIGAVVLGFGIPVITILVC). The Cytoplasmic portion of the chain corresponds to 213–238 (YTALCLKLRHLAKSNKLTEKSGRSSK). Residues 239–262 (AIGVICTVILVFVVCYSPYHVDLL) traverse the membrane as a helical segment. Over 263–282 (QYMIKKLRYDPDCSELHKFQ) the chain is Extracellular. A helical membrane pass occupies residues 283–307 (ISLHITVCFMNLNSCLDPFIYFFAC). Residues 308–368 (KGYKKKVLKL…SSVLLNSLEQ (61 aa)) lie on the Cytoplasmic side of the membrane.

This sequence belongs to the G-protein coupled receptor 1 family.

It is found in the cell membrane. Its function is as follows. G-protein coupled receptor expressed in lymphocytes that acts as a chemotactic receptor for B-cells, T-cells, splenic dendritic cells, monocytes/macrophages and astrocytes. Receptor for oxysterol 7-alpha,25-dihydroxycholesterol (7-alpha,25-OHC) and other related oxysterols. Mediates cell positioning and movement of a number of cells by binding the 7-alpha,25-OHC ligand that forms a chemotactic gradient. Binding of 7-alpha,25-OHC mediates the correct localization of B-cells during humoral immune responses. This Danio rerio (Zebrafish) protein is G-protein coupled receptor 183-A (gpr183a).